The chain runs to 334 residues: Formamidase (334 aa).

Residues 14–260 enclose the CN hydrolase domain; the sequence is FLVAAIQFPV…WEIVTGEIYP (247 aa). The Proton acceptor role is filled by Glu60. Lys133 (proton donor) is an active-site residue. Residue Cys166 is the Nucleophile of the active site.

Belongs to the carbon-nitrogen hydrolase superfamily. Aliphatic amidase family. Homotetramer.

It catalyses the reaction formamide + H2O = formate + NH4(+). With respect to regulation, inhibited by iodoacetate. Appears to be regulated by the fur protein, but this effect is not mediated at the transcriptional level. Its function is as follows. Is an aliphatic amidase with a restricted substrate specificity, as it only hydrolyzes formamide. Probably involved in the nitrogen metabolism of H.pylori. The sequence is that of Formamidase (amiF) from Helicobacter pylori (strain ATCC 700392 / 26695) (Campylobacter pylori).